The following is a 355-amino-acid chain: MSLCTVEINLSTIKNNYLLLQDICKTSLVGAAVKANGYGLGAVQISKALIEENCRHFFVASSEEGVNLRNALGLDVNILVLNGVFEHDALELIEYNLTPVLNNLKQIEIWQKFSNLKNRLLPCYLHFNTGINRLGLSSDEIEQLINDRDLLKGLDLQYIISHLAISEEIDNPYNLEQLNRFKAYLQYFPNVKASLANSGGIFLGQDYHFDLARPGAALYGLNPLTKNPVTLKAPIIHLQNLTLDSHIGYNMTFTTKRDSVIATLPLGYADGFSRNFSNQGEVFINSRSVPIVGRVSMDLINIDVTDLPPSEIFLGQEAEIIGNYCTPDKIASIIGTIGYEVLTNLGSRYKRKYIG.

Lysine 34 acts as the Proton acceptor; specific for D-alanine in catalysis. The residue at position 34 (lysine 34) is an N6-(pyridoxal phosphate)lysine. Arginine 133 is a binding site for substrate. The active-site Proton acceptor; specific for L-alanine is the tyrosine 249. Methionine 297 provides a ligand contact to substrate.

The protein belongs to the alanine racemase family. Requires pyridoxal 5'-phosphate as cofactor.

It catalyses the reaction L-alanine = D-alanine. It functions in the pathway amino-acid biosynthesis; D-alanine biosynthesis; D-alanine from L-alanine: step 1/1. Its function is as follows. Catalyzes the interconversion of L-alanine and D-alanine. May also act on other amino acids. This Rickettsia conorii (strain ATCC VR-613 / Malish 7) protein is Alanine racemase (alr).